We begin with the raw amino-acid sequence, 481 residues long: uncharacterized protein (481 aa).

10 helical membrane passes run Leu-32–Val-52, Phe-82–Tyr-102, Met-137–Phe-157, Val-173–Ile-193, Val-204–Ile-224, Trp-258–Thr-278, Val-289–Glu-309, Leu-348–Val-368, Leu-392–Leu-412, and Thr-418–Ile-438.

It belongs to the BCCT transporter (TC 2.A.15) family.

The protein resides in the cell inner membrane. Its function is as follows. Probable transporter whose substrate is unknown. Is not involved in aerobic D-malate transport. This is an uncharacterized protein from Escherichia coli (strain K12).